A 412-amino-acid chain; its full sequence is MKAEIMAIGTEILLGDIVNTNAQFLAKELANLGIGVYHQSVVGDNSERILEAFDNAFKNCDTIITTGGLGPTKDDLSKELAAKYFNMEMCLREELLCDLEDYFKKNNLEMTENNKKQCYFPKEAIILPNPNGTAPGAILEGENNKRIILLPGPPREMEPMFTNHVVPYLSKFTDSVLVSKILRVFGIGESKMEDLVCDLLDNENPTVAPYAKNIDVILRITAKGKNKEEAEKLISPMEKEIRKRLGDNIYGEGEVTLEEVVGKLLVDKKMTVSTAESCTGGMVASTLINYPGISEVFMEGAVTYSNEAKMKRLGVKKETLEDFGAVSEECAREMAKGIAKNAGTRIGISTTGIAGPGGGTEEKPVGLVYAGLCIDGITKVKKFNFKADRQKVRTRTMMNVLDWLRRELEKID.

The protein belongs to the CinA family.

This is Putative competence-damage inducible protein from Clostridium perfringens (strain ATCC 13124 / DSM 756 / JCM 1290 / NCIMB 6125 / NCTC 8237 / Type A).